Consider the following 285-residue polypeptide: Trypsin Tyr p 3.0101 (285 aa).

The signal sequence occupies residues M1–A16. The propeptide occupies K17–F33. The Peptidase S1 domain maps to I34–K262. An intrachain disulfide couples C58 to C74. Residues H73 and D120 each act as charge relay system in the active site. 2 disulfide bridges follow: C186-C202 and C214-C238. Residue S218 is the Charge relay system of the active site.

Belongs to the peptidase S1 family.

The protein localises to the secreted. The enzyme catalyses Preferential cleavage: Arg-|-Xaa, Lys-|-Xaa.. Its activity is regulated as follows. Inhibited by the serine protease inhibitor phenylmethylsulfonyl, and trypsin inhibitors soybean trypsin inhibitor and tosyllysine chloromethyl ketone. Not inhibited by dithiothreitol, a cysteine protease inhibitor. Its function is as follows. Digests TAMe (p-toluene arginine methyl ester), but not ethyl N-benzoyl-L-tyrosinate (BTEE). The protein is Trypsin Tyr p 3.0101 of Tyrophagus putrescentiae (Mold mite).